The following is a 310-amino-acid chain: tRNA dimethylallyltransferase (310 aa).

10–17 (GPTAVGKS) contacts ATP. Residue 12 to 17 (TAVGKS) participates in substrate binding. The interval 35–38 (DSMQ) is interaction with substrate tRNA.

Belongs to the IPP transferase family. As to quaternary structure, monomer. The cofactor is Mg(2+).

It catalyses the reaction adenosine(37) in tRNA + dimethylallyl diphosphate = N(6)-dimethylallyladenosine(37) in tRNA + diphosphate. Catalyzes the transfer of a dimethylallyl group onto the adenine at position 37 in tRNAs that read codons beginning with uridine, leading to the formation of N6-(dimethylallyl)adenosine (i(6)A). This is tRNA dimethylallyltransferase from Clostridium perfringens (strain 13 / Type A).